Reading from the N-terminus, the 209-residue chain is Thymidine kinase (209 aa).

ATP-binding positions include 16 to 23 and 90 to 93; these read GPMFAGKT and DEAQ. Glu91 (proton acceptor) is an active-site residue.

The protein belongs to the thymidine kinase family. Homotetramer.

The protein localises to the cytoplasm. It catalyses the reaction thymidine + ATP = dTMP + ADP + H(+). This Onion yellows phytoplasma (strain OY-M) protein is Thymidine kinase.